The chain runs to 470 residues: 3-oxo-isoapionate kinase (470 aa).

Positions 30 and 78 each coordinate substrate. Residues S291, 403–406, and G451 each bind ATP; that span reads GGDS.

Belongs to the four-carbon acid sugar kinase family.

It catalyses the reaction 3-oxoisoapionate + ATP = 3-oxoisoapionate 4-phosphate + ADP + H(+). It participates in carbohydrate metabolism. Its function is as follows. Involved in catabolism of D-apiose. Catalyzes the phosphorylation of 3-oxo-isoapionate to 3-oxo-isoapionate 4-phosphate. The polypeptide is 3-oxo-isoapionate kinase (Paraburkholderia graminis (strain ATCC 700544 / DSM 17151 / LMG 18924 / NCIMB 13744 / C4D1M)).